The chain runs to 340 residues: MKFLDQAKVYIRSGNGGAGAISFRREKFIEFGGPDGGDGGRGGDVWALVVDGLNTLIDYRYQQHFRAKTGGHGKGRNMTGQKGDDIILKVPVGTQIFEEDNTTLICDLTEVGQRYRLAKGGNGGFGNLHFTTSTNRAPRRANPGLSGEERTLWLRLKLIADAGIIGLPNAGKSTFLASVTAAKPKVADYPFTTLYPHLGVARIDAREFVLADIPGLIEGAHEGVGIGDRFLGHVERCRVLFHLISAQEEDVVKAYQIVRNELKAYGNNLNDKTEIIALSQIDTLTIEERKAKQEFLQKVTGKSVMMFSAVSREGLENLLRAGAHIIEMARKKDVVREEQD.

One can recognise an Obg domain in the interval 1 to 159 (MKFLDQAKVY…RTLWLRLKLI (159 aa)). An OBG-type G domain is found at 160–327 (ADAGIIGLPN…LLRAGAHIIE (168 aa)). GTP is bound by residues 166 to 173 (GLPNAGKS), 191 to 195 (FTTLY), 212 to 215 (DIPG), 279 to 282 (SQID), and 308 to 310 (SAV). Mg(2+)-binding residues include serine 173 and threonine 193.

The protein belongs to the TRAFAC class OBG-HflX-like GTPase superfamily. OBG GTPase family. In terms of assembly, monomer. Mg(2+) serves as cofactor.

The protein localises to the cytoplasm. An essential GTPase which binds GTP, GDP and possibly (p)ppGpp with moderate affinity, with high nucleotide exchange rates and a fairly low GTP hydrolysis rate. Plays a role in control of the cell cycle, stress response, ribosome biogenesis and in those bacteria that undergo differentiation, in morphogenesis control. The chain is GTPase Obg from Bartonella henselae (strain ATCC 49882 / DSM 28221 / CCUG 30454 / Houston 1) (Rochalimaea henselae).